Here is a 247-residue protein sequence, read N- to C-terminus: Enolase-phosphatase E1 (247 aa).

It belongs to the HAD-like hydrolase superfamily. MasA/MtnC family. Monomer. The cofactor is Mg(2+).

It carries out the reaction 5-methylsulfanyl-2,3-dioxopentyl phosphate + H2O = 1,2-dihydroxy-5-(methylsulfanyl)pent-1-en-3-one + phosphate. It participates in amino-acid biosynthesis; L-methionine biosynthesis via salvage pathway; L-methionine from S-methyl-5-thio-alpha-D-ribose 1-phosphate: step 3/6. The protein operates within amino-acid biosynthesis; L-methionine biosynthesis via salvage pathway; L-methionine from S-methyl-5-thio-alpha-D-ribose 1-phosphate: step 4/6. Its function is as follows. Bifunctional enzyme that catalyzes the enolization of 2,3-diketo-5-methylthiopentyl-1-phosphate (DK-MTP-1-P) into the intermediate 2-hydroxy-3-keto-5-methylthiopentenyl-1-phosphate (HK-MTPenyl-1-P), which is then dephosphorylated to form the acireductone 1,2-dihydroxy-3-keto-5-methylthiopentene (DHK-MTPene). The polypeptide is Enolase-phosphatase E1 (Leptospira biflexa serovar Patoc (strain Patoc 1 / Ames)).